A 111-amino-acid chain; its full sequence is Flagellar hook-basal body complex protein FliE (111 aa).

It belongs to the FliE family.

It is found in the bacterial flagellum basal body. This is Flagellar hook-basal body complex protein FliE from Brucella ovis (strain ATCC 25840 / 63/290 / NCTC 10512).